Reading from the N-terminus, the 126-residue chain is Protein ApaG (126 aa).

In terms of domain architecture, ApaG spans 2–126; that stretch reads SDPRYQIDVS…FRLAVPGALH (125 aa).

The polypeptide is Protein ApaG (Pseudomonas entomophila (strain L48)).